The sequence spans 437 residues: ATP-dependent protease ATPase subunit HslU (437 aa).

Residues Val-18, 60 to 65 (GCGKTE), Asp-250, Glu-315, and Arg-387 contribute to the ATP site.

It belongs to the ClpX chaperone family. HslU subfamily. In terms of assembly, a double ring-shaped homohexamer of HslV is capped on each side by a ring-shaped HslU homohexamer. The assembly of the HslU/HslV complex is dependent on binding of ATP.

The protein resides in the cytoplasm. ATPase subunit of a proteasome-like degradation complex; this subunit has chaperone activity. The binding of ATP and its subsequent hydrolysis by HslU are essential for unfolding of protein substrates subsequently hydrolyzed by HslV. HslU recognizes the N-terminal part of its protein substrates and unfolds these before they are guided to HslV for hydrolysis. This chain is ATP-dependent protease ATPase subunit HslU, found in Methylobacterium radiotolerans (strain ATCC 27329 / DSM 1819 / JCM 2831 / NBRC 15690 / NCIMB 10815 / 0-1).